Consider the following 235-residue polypeptide: Urease accessory protein UreF (235 aa).

Belongs to the UreF family. UreD, UreF and UreG form a complex that acts as a GTP-hydrolysis-dependent molecular chaperone, activating the urease apoprotein by helping to assemble the nickel containing metallocenter of UreC. The UreE protein probably delivers the nickel.

It localises to the cytoplasm. Its function is as follows. Required for maturation of urease via the functional incorporation of the urease nickel metallocenter. The polypeptide is Urease accessory protein UreF (Ureaplasma parvum serovar 3 (strain ATCC 27815 / 27 / NCTC 11736)).